The primary structure comprises 359 residues: Putative plant UBX domain-containing protein 15 (359 aa).

Residues 277 to 357 (DRSVVCSISV…GIANSIISVT (81 aa)) enclose the UBX domain.

The polypeptide is Putative plant UBX domain-containing protein 15 (Arabidopsis thaliana (Mouse-ear cress)).